A 190-amino-acid chain; its full sequence is Holliday junction branch migration complex subunit RuvA (190 aa).

The interval 1–64 (MIGRITGTLI…EDAQLLYGFG (64 aa)) is domain I. The interval 65-137 (SSAERSTFRE…MRGKLGADIG (73 aa)) is domain II. The flexible linker stretch occupies residues 137-141 (GATPH). A domain III region spans residues 142-190 (AASGHQSDILNALLALGYSDKESQAALKKLPDGVDVSEGIRLALKALVR).

The protein belongs to the RuvA family. In terms of assembly, homotetramer. Forms an RuvA(8)-RuvB(12)-Holliday junction (HJ) complex. HJ DNA is sandwiched between 2 RuvA tetramers; dsDNA enters through RuvA and exits via RuvB. An RuvB hexamer assembles on each DNA strand where it exits the tetramer. Each RuvB hexamer is contacted by two RuvA subunits (via domain III) on 2 adjacent RuvB subunits; this complex drives branch migration. In the full resolvosome a probable DNA-RuvA(4)-RuvB(12)-RuvC(2) complex forms which resolves the HJ.

Its subcellular location is the cytoplasm. Its function is as follows. The RuvA-RuvB-RuvC complex processes Holliday junction (HJ) DNA during genetic recombination and DNA repair, while the RuvA-RuvB complex plays an important role in the rescue of blocked DNA replication forks via replication fork reversal (RFR). RuvA specifically binds to HJ cruciform DNA, conferring on it an open structure. The RuvB hexamer acts as an ATP-dependent pump, pulling dsDNA into and through the RuvAB complex. HJ branch migration allows RuvC to scan DNA until it finds its consensus sequence, where it cleaves and resolves the cruciform DNA. This is Holliday junction branch migration complex subunit RuvA from Bordetella pertussis (strain Tohama I / ATCC BAA-589 / NCTC 13251).